Consider the following 202-residue polypeptide: LexA repressor (202 aa).

Positions 27–47 (RAEIAAELGFRSANAAEEHLR) form a DNA-binding region, H-T-H motif. Active-site for autocatalytic cleavage activity residues include serine 119 and lysine 156.

The protein belongs to the peptidase S24 family. Homodimer.

The catalysed reaction is Hydrolysis of Ala-|-Gly bond in repressor LexA.. Its function is as follows. Represses a number of genes involved in the response to DNA damage (SOS response), including recA and lexA. In the presence of single-stranded DNA, RecA interacts with LexA causing an autocatalytic cleavage which disrupts the DNA-binding part of LexA, leading to derepression of the SOS regulon and eventually DNA repair. The polypeptide is LexA repressor (Marinobacter nauticus (strain ATCC 700491 / DSM 11845 / VT8) (Marinobacter aquaeolei)).